A 512-amino-acid polypeptide reads, in one-letter code: Glycerol kinase (512 aa).

Threonine 14 provides a ligand contact to ADP. Threonine 14, threonine 15, and serine 16 together coordinate ATP. Threonine 14 serves as a coordination point for sn-glycerol 3-phosphate. Arginine 18 contacts ADP. Positions 83, 84, 135, and 244 each coordinate sn-glycerol 3-phosphate. Glycerol-binding residues include arginine 83, glutamate 84, tyrosine 135, aspartate 244, and glutamine 245. Positions 266, 309, 410, and 414 each coordinate ADP. Threonine 266, glycine 309, and glycine 410 together coordinate ATP.

This sequence belongs to the FGGY kinase family.

The catalysed reaction is glycerol + ATP = sn-glycerol 3-phosphate + ADP + H(+). It functions in the pathway polyol metabolism; glycerol degradation via glycerol kinase pathway; sn-glycerol 3-phosphate from glycerol: step 1/1. Its activity is regulated as follows. Inhibited by fructose 1,6-bisphosphate (FBP). In terms of biological role, key enzyme in the regulation of glycerol uptake and metabolism. Catalyzes the phosphorylation of glycerol to yield sn-glycerol 3-phosphate. The sequence is that of Glycerol kinase from Gluconobacter oxydans (strain 621H) (Gluconobacter suboxydans).